Consider the following 135-residue polypeptide: Holo-[acyl-carrier-protein] synthase (135 aa).

Residues Asp-7 and Glu-57 each contribute to the Mg(2+) site.

Belongs to the P-Pant transferase superfamily. AcpS family. Mg(2+) is required as a cofactor.

The protein localises to the cytoplasm. The catalysed reaction is apo-[ACP] + CoA = holo-[ACP] + adenosine 3',5'-bisphosphate + H(+). Functionally, transfers the 4'-phosphopantetheine moiety from coenzyme A to a Ser of acyl-carrier-protein. This Corynebacterium glutamicum (strain ATCC 13032 / DSM 20300 / JCM 1318 / BCRC 11384 / CCUG 27702 / LMG 3730 / NBRC 12168 / NCIMB 10025 / NRRL B-2784 / 534) protein is Holo-[acyl-carrier-protein] synthase.